The chain runs to 50 residues: Acidic phospholipase A2 1 (50 aa).

Ca(2+)-binding residues include tyrosine 27, glycine 29, and glycine 31. Cysteine 28 and cysteine 44 are oxidised to a cystine. Histidine 47 is a catalytic residue. Aspartate 48 serves as a coordination point for Ca(2+).

This sequence belongs to the phospholipase A2 family. Group II subfamily. D49 sub-subfamily. As to quaternary structure, monomer. Ca(2+) is required as a cofactor. Expressed by the venom gland.

The protein resides in the secreted. The catalysed reaction is a 1,2-diacyl-sn-glycero-3-phosphocholine + H2O = a 1-acyl-sn-glycero-3-phosphocholine + a fatty acid + H(+). In terms of biological role, snake venom phospholipase A2 (PLA2) that displays a potent enzymatic activity as measured by indirect hemolysis of red blood cells. Is neither lethal when injected into mice nor does it present anticoagulant activity. Displays a moderate inhibitory activity on the aggregation of platelets induced by low levels of ADP, thrombin and arachidonate. In contrast, strongly inhibits platelet aggregation induced by high doses of collagen. Shows myotoxic activity, increases the plasma creatine-kinase activity and induces edema and myonecrosis of mouse skeletal muscles. PLA2 catalyzes the calcium-dependent hydrolysis of the 2-acyl groups in 3-sn-phosphoglycerides. The sequence is that of Acidic phospholipase A2 1 from Lachesis muta muta (Bushmaster).